The following is a 154-amino-acid chain: S-protein homolog 12 (154 aa).

A signal peptide spans 1–30; sequence MGTNKIPKTLNGNLVLILIITIMMVTHSHG.

Belongs to the plant self-incompatibility (S1) protein family.

The protein localises to the secreted. This is S-protein homolog 12 from Arabidopsis thaliana (Mouse-ear cress).